Here is a 133-residue protein sequence, read N- to C-terminus: Hydrogenase maturation factor HypA (133 aa).

His-2 is a Ni(2+) binding site. Zn(2+) is bound by residues Cys-73, Cys-75, Cys-105, and Cys-108.

This sequence belongs to the HypA/HybF family.

Its function is as follows. Involved in the maturation of [NiFe] hydrogenases. Required for nickel insertion into the metal center of the hydrogenase. This Methanosarcina barkeri (strain Fusaro / DSM 804) protein is Hydrogenase maturation factor HypA.